A 634-amino-acid polypeptide reads, in one-letter code: Ras and EF-hand domain-containing protein homolog (634 aa).

2 consecutive EF-hand domains span residues 5–33 (EVEN…CPQL) and 33–68 (LDDN…TVQH). D46, D48, S50, K52, and E57 together coordinate Ca(2+). A coiled-coil region spans residues 169-310 (LSEKKHENER…RCEFDQKQDE (142 aa)). The disordered stretch occupies residues 212–234 (ARQEERDRLTKEKEEMRQRMSDE). GTP contacts are provided by residues 449-454 (AVGKSS), 552-555 (NKVD), and 585-586 (AL). Residues 632-634 (RGS) constitute a propeptide, removed in mature form.

This sequence belongs to the small GTPase superfamily. Rab family. In terms of assembly, homodimer.

It is found in the cytoplasm. The protein resides in the perinuclear region. Binds GTP and GDP. Plays a role in uterine seam cell development. In Caenorhabditis elegans, this protein is Ras and EF-hand domain-containing protein homolog.